The following is a 329-amino-acid chain: Vitamin B12 import system permease protein BtuC (329 aa).

Helical transmembrane passes span 22 to 42 (LSVL…QWIA), 64 to 84 (LAVL…QALF), 91 to 111 (PGLL…VLLG), 115 to 135 (LPGW…TLIL), 149 to 169 (LLAG…AIYF), 187 to 207 (GGVD…SLWI), 243 to 263 (GWMV…GLVI), 277 to 297 (ALLP…DVIA), and 305 to 325 (ELPI…WLLL).

The protein belongs to the binding-protein-dependent transport system permease family. FecCD subfamily. As to quaternary structure, the complex is composed of two ATP-binding proteins (BtuD), two transmembrane proteins (BtuC) and a solute-binding protein (BtuF).

It is found in the cell inner membrane. In terms of biological role, part of the ABC transporter complex BtuCDF involved in vitamin B12 import. Involved in the translocation of the substrate across the membrane. The polypeptide is Vitamin B12 import system permease protein BtuC (Citrobacter koseri (strain ATCC BAA-895 / CDC 4225-83 / SGSC4696)).